Here is a 462-residue protein sequence, read N- to C-terminus: Sonic hedgehog protein (462 aa).

An N-terminal signal peptide occupies residues 1–23 (MLLLARCLLLVLVSSLLVCSGLA). A lipid anchor (N-palmitoyl cysteine) is attached at Cys24. Positions 32 to 38 (KRRHPKK) match the Cardin-Weintraub motif. The Ca(2+) site is built by Glu89, Glu90, Asp95, Thr125, Glu126, Asp129, and Asp131. Zn(2+) contacts are provided by His140, Asp147, and His182. Gly197 carries the Cholesterol glycine ester lipid modification. Residue Asn278 is glycosylated (N-linked (GlcNAc...) asparagine). 2 disordered regions span residues 279–302 (DSAT…LGPR) and 395–414 (TDRG…GRVA). Positions 283-292 (GEPEASSGSG) are enriched in low complexity. Positions 400-412 (DSGGGDRGGGGGR) are enriched in gly residues.

The protein belongs to the hedgehog family. As to quaternary structure, multimer. Interacts with HHATL/GUP1 which negatively regulates HHAT-mediated palmitoylation of the SHH N-terminus. Interacts with BOC and CDON. Interacts with HHIP. Interacts with DISP1 via its cholesterol anchor. Interacts with SCUBE2. Interacts with glypican GPC3. Post-translationally, the C-terminal domain displays an autoproteolysis activity and a cholesterol transferase activity. Both activities result in the cleavage of the full-length protein and covalent attachment of a cholesterol moiety to the C-terminal of the newly generated N-terminal fragment (ShhN). Cholesterylation is required for the sonic hedgehog protein N-product targeting to lipid rafts and multimerization. ShhN is the active species in both local and long-range signaling, whereas the C-product (ShhC) is degraded in the endoplasmic reticulum. N-palmitoylation by HHAT of ShhN is required for sonic hedgehog protein N-product multimerization and full activity. It is a prerequisite for the membrane-proximal positioning and the subsequent shedding of this N-terminal peptide. In terms of processing, the lipidated N- and C-terminal peptides of ShhNp can be cleaved (shedding). The N-terminal palmitoylated peptide is cleaved at the Cardin-Weintraub (CW) motif site. The cleavage reduced the interactions with heparan sulfate. The cleavage is enhanced by SCUBE2.

The protein localises to the endoplasmic reticulum membrane. It localises to the golgi apparatus membrane. The protein resides in the secreted. Its subcellular location is the cell membrane. The catalysed reaction is glycyl-L-cysteinyl-[protein] + cholesterol + H(+) = [protein]-C-terminal glycyl cholesterol ester + N-terminal L-cysteinyl-[protein]. Its function is as follows. The C-terminal part of the sonic hedgehog protein precursor displays an autoproteolysis and a cholesterol transferase activity. Both activities result in the cleavage of the full-length protein into two parts (ShhN and ShhC) followed by the covalent attachment of a cholesterol moiety to the C-terminal of the newly generated ShhN. Both activities occur in the endoplasmic reticulum. Once cleaved, ShhC is degraded in the endoplasmic reticulum. Functionally, the dually lipidated sonic hedgehog protein N-product (ShhNp) is a morphogen which is essential for a variety of patterning events during development. Induces ventral cell fate in the neural tube and somites. Involved in the patterning of the anterior-posterior axis of the developing limb bud. Essential for axon guidance. Binds to the patched (PTCH1) receptor, which functions in association with smoothened (SMO), to activate the transcription of target genes. In the absence of SHH, PTCH1 represses the constitutive signaling activity of SMO. This Homo sapiens (Human) protein is Sonic hedgehog protein.